The chain runs to 205 residues: Non-specific lipid transfer protein GPI-anchored 13 (205 aa).

Residues 1-24 form the signal peptide; it reads MESRKIKVMATAIALIMVAMVVDA. Cystine bridges form between C36/C77, C46/C61, C62/C104, and C75/C113. N-linked (GlcNAc...) asparagine glycans are attached at residues N93, N137, and N165. The disordered stretch occupies residues 141–176; it reads SASAPTGSASEPTSMSSTPGSSAGNNSGRTTSVPGT. The GPI-anchor amidated asparagine moiety is linked to residue N177. A propeptide spans 178–205 (removed in mature form); it reads HAQSFSKQWLGLEVVAHFFVIFYIFILV.

This sequence belongs to the plant LTP family. Expressed preferentially in expanding leaves and sepals, restricted to the distal side. Expressed at low levels in roots and stems.

The protein localises to the cell membrane. In terms of biological role, probable lipid transfer protein. This chain is Non-specific lipid transfer protein GPI-anchored 13, found in Arabidopsis thaliana (Mouse-ear cress).